The primary structure comprises 365 residues: Aminomethyltransferase (365 aa).

This sequence belongs to the GcvT family. The glycine cleavage system is composed of four proteins: P, T, L and H.

The catalysed reaction is N(6)-[(R)-S(8)-aminomethyldihydrolipoyl]-L-lysyl-[protein] + (6S)-5,6,7,8-tetrahydrofolate = N(6)-[(R)-dihydrolipoyl]-L-lysyl-[protein] + (6R)-5,10-methylene-5,6,7,8-tetrahydrofolate + NH4(+). Functionally, the glycine cleavage system catalyzes the degradation of glycine. This chain is Aminomethyltransferase, found in Frankia alni (strain DSM 45986 / CECT 9034 / ACN14a).